The chain runs to 225 residues: Protein-L-isoaspartate O-methyltransferase (225 aa).

Residues 57–60, histidine 65, serine 89, 110–111, 142–143, threonine 216, and glutamine 221 each bind S-adenosyl-L-homocysteine; these read ATVS, EH, and DG. The active site involves serine 60.

This sequence belongs to the methyltransferase superfamily. L-isoaspartyl/D-aspartyl protein methyltransferase family. As to quaternary structure, monomer.

The protein resides in the cytoplasm. It localises to the cytosol. It carries out the reaction [protein]-L-isoaspartate + S-adenosyl-L-methionine = [protein]-L-isoaspartate alpha-methyl ester + S-adenosyl-L-homocysteine. Initiates the repair of damaged proteins by catalyzing methyl esterification of L-isoaspartyl and D-aspartyl residues produced by spontaneous isomerization and racemization of L-aspartyl and L-asparaginyl residues in aging peptides and proteins. This is Protein-L-isoaspartate O-methyltransferase (pcm-1) from Caenorhabditis elegans.